A 226-amino-acid polypeptide reads, in one-letter code: Large ribosomal subunit protein uL1 (226 aa).

This sequence belongs to the universal ribosomal protein uL1 family. Part of the 50S ribosomal subunit.

Functionally, binds directly to 23S rRNA. The L1 stalk is quite mobile in the ribosome, and is involved in E site tRNA release. In terms of biological role, protein L1 is also a translational repressor protein, it controls the translation of the L11 operon by binding to its mRNA. The chain is Large ribosomal subunit protein uL1 from Treponema pallidum (strain Nichols).